The chain runs to 157 residues: Protein AE7 (157 aa).

Belongs to the MIP18 family. Part of a complex formed of AE7, CIA1, MMS19 and NAR1. Interacts with CIA1 and MMS19, but not with NAR1. In terms of tissue distribution, expressed in the embryo, shoot apical meristem, leaf primordia, inflorescence and all floral organs.

The protein localises to the nucleus. It localises to the cytoplasm. Functionally, central member of the cytosolic iron-sulfur (Fe-S) protein assembly (CIA) pathway. Involved in leaf polarity formation. Promotes leaf adaxial identity. May play a role in the cell cycle progression and is required for cell proliferation. The polypeptide is Protein AE7 (Arabidopsis thaliana (Mouse-ear cress)).